A 755-amino-acid polypeptide reads, in one-letter code: uncharacterized protein (755 aa).

Disordered regions lie at residues 1–44 (MAAP…AAAQ), 72–91 (AEHSFSTLPPETGSVGATAQ), 99–174 (FSLS…IPHY), 393–467 (TTNV…SSSR), 523–545 (LPKTTGDTDPSGQATGGVTEGGG), 584–672 (VSSS…LPSG), and 734–755 (QAATAGSQPSSRRSSPTSPRRK). Low complexity-rich tracts occupy residues 10–25 (TTTQITQTGQTTTTTT) and 35–44 (TTTGSGAAAQ). Composition is skewed to low complexity over residues 112-130 (ISSSSDGSSISRTSSNASS), 139-151 (SPDLGDLDSLSGS), and 393-412 (TTNVTTEEGGGTNITSTKST). Over residues 429–446 (IEEDTIQFDDPGQGEDDN) the composition is skewed to acidic residues. The span at 452–462 (NTPPPPGPPPN) shows a compositional bias: pro residues. Residues 536-545 (ATGGVTEGGG) show a composition bias toward gly residues. A compositionally biased stretch (polar residues) spans 590–599 (LPQPQVATTI). Composition is skewed to low complexity over residues 600-666 (TPQA…QTPQ) and 740-755 (SQPSSRRSSPTSPRRK).

Belongs to the chlamydial CPn_0572/CT_456/TC_0741 family.

This is an uncharacterized protein from Chlamydia pneumoniae (Chlamydophila pneumoniae).